We begin with the raw amino-acid sequence, 88 residues long: Large ribosomal subunit protein bL27 (88 aa).

Positions 1 to 21 are disordered; it reads MAHKKGQGSTQNNRDSAGRRL.

This sequence belongs to the bacterial ribosomal protein bL27 family.

The protein is Large ribosomal subunit protein bL27 of Helicobacter pylori (strain J99 / ATCC 700824) (Campylobacter pylori J99).